Reading from the N-terminus, the 363-residue chain is Cytoplasmic tRNA 2-thiolation protein 1 (363 aa).

Residues 340–363 form a disordered region; it reads ASLNGTPRTPPTPAEPVEGIERAA.

It belongs to the TtcA family. CTU1/NCS6/ATPBD3 subfamily.

Its subcellular location is the cytoplasm. It functions in the pathway tRNA modification; 5-methoxycarbonylmethyl-2-thiouridine-tRNA biosynthesis. Functionally, plays a central role in 2-thiolation of mcm(5)S(2)U at tRNA wobble positions of tRNA(Lys), tRNA(Glu) and tRNA(Gln). Directly binds tRNAs and probably acts by catalyzing adenylation of tRNAs, an intermediate required for 2-thiolation. It is unclear whether it acts as a sulfurtransferase that transfers sulfur from thiocarboxylated URM1 onto the uridine of tRNAs at wobble position. Prior mcm(5) tRNA modification by the elongator complex is required for 2-thiolation. May also be involved in protein urmylation. The polypeptide is Cytoplasmic tRNA 2-thiolation protein 1 (Cryptococcus neoformans var. neoformans serotype D (strain B-3501A) (Filobasidiella neoformans)).